The primary structure comprises 341 residues: MKSVTLKELSLLLDGVVQGDETLVINSVATLEHATAGQISFLANSKYRAQLELTQASAVLLSAKDAQDYSGTALVVKDPYVGFARVAQLLDTTPKAAIGIHPSAQIDPSALLGEGVAIGANAVIGANVILGENVQIGAGTVIGQDCIIGSNTRLWANVTLYHNVHLGQDCIIHSGAIIGSDGFGYANERGQWIKIPQTGGVRIGDRVEIGASSTIDRGALGHTEIHNGVIIDNQVQVAHNDIIGENTAIAGSTTLAGSVTIGKHCIIGGNCAIAGHLTIADGVHLSGATNVTGNMREPGLYSSATVAMENKVWRKNTVRFRQLDELFQRVKTLEKNSNTPE.

The Proton acceptor role is filled by His-239.

It belongs to the transferase hexapeptide repeat family. LpxD subfamily. In terms of assembly, homotrimer.

The enzyme catalyses a UDP-3-O-[(3R)-3-hydroxyacyl]-alpha-D-glucosamine + a (3R)-hydroxyacyl-[ACP] = a UDP-2-N,3-O-bis[(3R)-3-hydroxyacyl]-alpha-D-glucosamine + holo-[ACP] + H(+). It functions in the pathway bacterial outer membrane biogenesis; LPS lipid A biosynthesis. Its function is as follows. Catalyzes the N-acylation of UDP-3-O-acylglucosamine using 3-hydroxyacyl-ACP as the acyl donor. Is involved in the biosynthesis of lipid A, a phosphorylated glycolipid that anchors the lipopolysaccharide to the outer membrane of the cell. This is UDP-3-O-acylglucosamine N-acyltransferase from Shewanella sp. (strain MR-4).